Here is a 316-residue protein sequence, read N- to C-terminus: Exonuclease DPD1, chloroplastic/mitochondrial (316 aa).

A chloroplast and mitochondrion-targeting transit peptide spans 1-63 (MCISISQVSR…NVSTTTQGSR (63 aa)). Positions 112–282 (IVSDLETTGL…SDVLLLSKVF (171 aa)) constitute an Exonuclease domain. Residues aspartate 115 and glutamate 117 each coordinate Mg(2+). Residue histidine 269 is the Proton donor/acceptor of the active site. Residue aspartate 274 participates in Mg(2+) binding.

Belongs to the exonuclease superfamily. TREX family. Requires Mg(2+) as cofactor. As to expression, highly expressed in mature pollen grains. Detected in flowers, senescing leaves and roots.

The protein resides in the plastid. The protein localises to the chloroplast. It is found in the mitochondrion. Inhibited by free nucleotide diphosphates (NDPs). Its function is as follows. Exonuclease required for organelle DNA degradation during pollen development. Plays non-essential roles in maternal inheritance. May be part of the DNA salvage machinery. This chain is Exonuclease DPD1, chloroplastic/mitochondrial, found in Arabidopsis thaliana (Mouse-ear cress).